Reading from the N-terminus, the 673-residue chain is Armadillo repeat-containing protein 8 (673 aa).

ARM repeat units follow at residues 51 to 92, 95 to 134, 138 to 176, 178 to 217, 225 to 265, 269 to 309, 313 to 352, 374 to 413, 416 to 455, 458 to 497, 501 to 540, 543 to 585, 588 to 627, and 634 to 673; these read NKQK…SLSM, ENNIKSLVDCHIIPALLQGLLCSDLIFIEACLRCLRTVFI, TPVQLLYTDPTVIPHLMSLLSRSQHTQEYITQIFAHCCK, PEHQTVLFNHGAIQNIAPLLISPSYKVRMQALKCFSVLAY, TLVN…YMCR, IRTE…YLME, ELQRIASVTDHLVSMLADYFKYPSSVSAITDIKRLDHDLK, DIRKKITETENMMDRIVSGLSESSIKVRLAAVRCLHSLSR, QQLRTSFHDHAVWKPLMKLLQNAPDEVLVMASSTLCNLLL, SPSKEPILESGVIELLCSLTQSDSSALRVNGIWALMNMAF, QKVKVEIVRALGTEQLFRLLSDPDTNVLMKTLGLLRNLLS, PHID…NIAD, TAKELIMTDDDMLQKIKYYMGHSNVKLQLAATFCISNLIW, and QERQDKLREMGFVDILHKLTQASDPDLCDRAKTAMQQYLA.

As to quaternary structure, identified in the CTLH complex that contains at least MAEA, RMND5A (or alternatively its paralog RMND5B), GID8, WDR26, and RANBP9 and/or RANBP10; ARMC8 has an ancillary role in the complex.

The protein localises to the nucleus. Its subcellular location is the cytoplasm. In terms of biological role, component of the CTLH E3 ubiquitin-protein ligase complex that mediates ubiquitination and subsequent proteasomal degradation of target proteins. This Danio rerio (Zebrafish) protein is Armadillo repeat-containing protein 8 (armc8).